The following is a 181-amino-acid chain: ATP synthase subunit delta (181 aa).

It belongs to the ATPase delta chain family. In terms of assembly, F-type ATPases have 2 components, F(1) - the catalytic core - and F(0) - the membrane proton channel. F(1) has five subunits: alpha(3), beta(3), gamma(1), delta(1), epsilon(1). F(0) has three main subunits: a(1), b(2) and c(10-14). The alpha and beta chains form an alternating ring which encloses part of the gamma chain. F(1) is attached to F(0) by a central stalk formed by the gamma and epsilon chains, while a peripheral stalk is formed by the delta and b chains.

It localises to the cell inner membrane. Functionally, f(1)F(0) ATP synthase produces ATP from ADP in the presence of a proton or sodium gradient. F-type ATPases consist of two structural domains, F(1) containing the extramembraneous catalytic core and F(0) containing the membrane proton channel, linked together by a central stalk and a peripheral stalk. During catalysis, ATP synthesis in the catalytic domain of F(1) is coupled via a rotary mechanism of the central stalk subunits to proton translocation. This protein is part of the stalk that links CF(0) to CF(1). It either transmits conformational changes from CF(0) to CF(1) or is implicated in proton conduction. This is ATP synthase subunit delta from Chlorobaculum parvum (strain DSM 263 / NCIMB 8327) (Chlorobium vibrioforme subsp. thiosulfatophilum).